Consider the following 443-residue polypeptide: Mitochondrial enolase superfamily member 1 (443 aa).

Substrate is bound by residues 24-26 (GSD) and Tyr-34. A Phosphoserine modification is found at Ser-148. Lys-220 serves as a coordination point for substrate. Lys-222 (proton donor/acceptor) is an active-site residue. Asp-250 serves as a coordination point for Mg(2+). Substrate contacts are provided by residues Asn-252, Glu-276, Glu-305, 355–357 (HAG), and Glu-386. Residues Glu-276 and Glu-305 each contribute to the Mg(2+) site. Residue His-355 is part of the active site.

This sequence belongs to the mandelate racemase/muconate lactonizing enzyme family. ENOSF1 subfamily. Mg(2+) is required as a cofactor. Could be sumoylated.

The protein localises to the mitochondrion. It carries out the reaction L-fuconate = 2-dehydro-3-deoxy-L-fuconate + H2O. Its function is as follows. Plays a role in the catabolism of L-fucose, a sugar that is part of the carbohydrates that are attached to cellular glycoproteins. Catalyzes the dehydration of L-fuconate to 2-keto-3-deoxy-L-fuconate by the abstraction of the 2-proton to generate an enediolate intermediate that is stabilized by the magnesium ion. May down-regulate thymidylate synthase activity, possibly already at the RNA level, by promoting the degradation of TYMS mRNA via an antisense RNA-based mechanism. The sequence is that of Mitochondrial enolase superfamily member 1 (ENOSF1) from Bos taurus (Bovine).